The sequence spans 604 residues: Testis-expressed protein 13C-1 (604 aa).

4 disordered regions span residues 314-337, 374-397, 485-523, and 538-580; these read EGEG…SHKD, PVMP…RPKI, CLNA…HPRK, and ATKQ…SANC. Positions 322–333 are enriched in polar residues; that stretch reads QGTSLHGDSSNN. A compositionally biased stretch (basic and acidic residues) spans 544-572; it reads KQPEGIKSLESKQPQETKSSESKQQEKPL.

It belongs to the TEX13 family.

Its function is as follows. Plays a role in transcriptional repression. The protein is Testis-expressed protein 13C-1 of Mus musculus (Mouse).